The following is a 333-amino-acid chain: Glycerol-3-phosphate dehydrogenase [NAD(P)+] (333 aa).

Residues S10, W11, H31, R32, and K105 each coordinate NADPH. Positions 105, 136, and 138 each coordinate sn-glycerol 3-phosphate. Position 140 (A140) interacts with NADPH. Residues K191, D244, S254, R255, and N256 each contribute to the sn-glycerol 3-phosphate site. K191 functions as the Proton acceptor in the catalytic mechanism. R255 is an NADPH binding site. The NADPH site is built by I279 and E281.

The protein belongs to the NAD-dependent glycerol-3-phosphate dehydrogenase family.

The protein localises to the cytoplasm. It catalyses the reaction sn-glycerol 3-phosphate + NAD(+) = dihydroxyacetone phosphate + NADH + H(+). It carries out the reaction sn-glycerol 3-phosphate + NADP(+) = dihydroxyacetone phosphate + NADPH + H(+). Its pathway is membrane lipid metabolism; glycerophospholipid metabolism. In terms of biological role, catalyzes the reduction of the glycolytic intermediate dihydroxyacetone phosphate (DHAP) to sn-glycerol 3-phosphate (G3P), the key precursor for phospholipid synthesis. This is Glycerol-3-phosphate dehydrogenase [NAD(P)+] from Pelodictyon phaeoclathratiforme (strain DSM 5477 / BU-1).